Reading from the N-terminus, the 343-residue chain is N-acetyl-gamma-glutamyl-phosphate reductase (343 aa).

The active site involves Cys146.

Belongs to the NAGSA dehydrogenase family. Type 1 subfamily.

It localises to the cytoplasm. The enzyme catalyses N-acetyl-L-glutamate 5-semialdehyde + phosphate + NADP(+) = N-acetyl-L-glutamyl 5-phosphate + NADPH + H(+). The protein operates within amino-acid biosynthesis; L-arginine biosynthesis; N(2)-acetyl-L-ornithine from L-glutamate: step 3/4. In terms of biological role, catalyzes the NADPH-dependent reduction of N-acetyl-5-glutamyl phosphate to yield N-acetyl-L-glutamate 5-semialdehyde. This is N-acetyl-gamma-glutamyl-phosphate reductase from Acidothermus cellulolyticus (strain ATCC 43068 / DSM 8971 / 11B).